We begin with the raw amino-acid sequence, 240 residues long: EF-hand domain-containing protein D2 (240 aa).

Residues Met1–Ala51 are disordered. Residue Ala2 is modified to N-acetylalanine. Ser11 is subject to Phosphoserine. Positions Ala32–Ala47 are enriched in low complexity. Residues Ser74 and Ser76 each carry the phosphoserine modification. Phosphotyrosine is present on Tyr83. 2 EF-hand domains span residues Lys92–Pro127 and Gln128–Gly163. The Ca(2+) site is built by Asp105, Asp109, Glu116, Asp141, Asp143, Asp145, Lys147, and Glu152. The residue at position 233 (Lys233) is an N6-acetyllysine.

Interacts with CASP9; with inactive form. Detected in thymus, kidney, spleen, lung, liver and brain. Highest abundance in brain and lowest in kidney and thymus.

Its subcellular location is the membrane raft. In terms of biological role, may regulate B-cell receptor (BCR)-induced immature and primary B-cell apoptosis. Plays a role as negative regulator of the canonical NF-kappa-B-activating branch. Controls spontaneous apoptosis through the regulation of BCL2L1 abundance. This is EF-hand domain-containing protein D2 (Efhd2) from Mus musculus (Mouse).